A 334-amino-acid chain; its full sequence is N-acetyl-gamma-glutamyl-phosphate reductase (334 aa).

The active site involves C154.

It belongs to the NAGSA dehydrogenase family. Type 1 subfamily.

It localises to the cytoplasm. The catalysed reaction is N-acetyl-L-glutamate 5-semialdehyde + phosphate + NADP(+) = N-acetyl-L-glutamyl 5-phosphate + NADPH + H(+). It participates in amino-acid biosynthesis; L-arginine biosynthesis; N(2)-acetyl-L-ornithine from L-glutamate: step 3/4. In terms of biological role, catalyzes the NADPH-dependent reduction of N-acetyl-5-glutamyl phosphate to yield N-acetyl-L-glutamate 5-semialdehyde. The sequence is that of N-acetyl-gamma-glutamyl-phosphate reductase from Photorhabdus laumondii subsp. laumondii (strain DSM 15139 / CIP 105565 / TT01) (Photorhabdus luminescens subsp. laumondii).